We begin with the raw amino-acid sequence, 1093 residues long: Synaptopodin-2 (1093 aa).

Positions 1-180 (MGTGDFICIS…PDSQRGRVAE (180 aa)) are interaction with VPS18. The region spanning 6–88 (FICISMTGGA…SLQMLIKRPS (83 aa)) is the PDZ domain. Disordered regions lie at residues 144 to 174 (ENQR…PDSQ) and 211 to 233 (ASGP…DPNL). Residues 222–233 (EKSKSPDPDPNL) show a composition bias toward basic and acidic residues. Phosphoserine is present on residues serine 274, serine 310, serine 329, and serine 330. A disordered region spans residues 329–369 (SSEGTEQGEDPRSEKDHSRPHKHRARHARLRRSESLSEKQV). Threonine 333 is modified (phosphothreonine). Basic residues predominate over residues 346–358 (SRPHKHRARHARL). Over residues 359–369 (RRSESLSEKQV) the composition is skewed to basic and acidic residues. Residues 398–406 (KKRRRRARK) carry the Nuclear localization signal motif. Interaction with ACTN2 regions lie at residues 481-663 (MEML…FYDS), 664-924 (SERI…PPVA), and 901-1093 (QSPT…VVEE). 2 disordered regions span residues 507–803 (AQKE…GTVV) and 834–870 (AVAS…GMSG). F-actin binding stretches follow at residues 534–663 (TSYQ…FYDS) and 664–803 (SERI…GTVV). 3 positions are modified to phosphoserine: serine 548, serine 549, and serine 551. Composition is skewed to polar residues over residues 565-579 (PQQN…TANI) and 595-611 (SVNQ…NMTS). Serine 604 carries the post-translational modification Phosphoserine. Residues 607-811 (RNMTSPIADF…VVSSIKIAQP (205 aa)) form an interaction with YWHAB region. Residue threonine 610 is modified to Phosphothreonine. Serine 611 carries the post-translational modification Phosphoserine. Residues 615–626 (DFPAPPPYSAVT) form an interaction with BAG3 region. Composition is skewed to pro residues over residues 617–630 (PAPP…PPPD) and 644–655 (AQPPPWPQPAPW). The short motif at 619–622 (PPPY) is the PPPY motif element. Residue tyrosine 622 is modified to Phosphotyrosine. Threonine 626 bears the Phosphothreonine mark. A compositionally biased stretch (basic and acidic residues) spans 663–674 (SSERIASRDERI). Residues 664–916 (SERIASRDER…LPASWKYSSN (253 aa)) form an F-actin bundling activity region. Serine 705 and serine 729 each carry phosphoserine. Residues 751-900 (AKQKTPPPVA…DTVQAHAARA (150 aa)) are actin binding. Threonine 755 and threonine 774 each carry phosphothreonine. Positions 762–784 (KPAVKSSSSQPVTPVSPVWSPGV) are enriched in low complexity. Phosphoserine occurs at positions 777 and 781. 2 stretches are compositionally biased toward polar residues: residues 793–803 (PTSNPSKGTVV) and 835–853 (VASQ…TVNA). The interaction with FLNC stretch occupies residues 810-1093 (QPSYPPARPA…QVWKPSVVEE (284 aa)). Serine 902, serine 906, and serine 910 each carry phosphoserine. The segment at 937–956 (ALKSQPSAAQPSKMGKKKGK) is disordered. The tract at residues 1000–1019 (LAMKQALPPRPVNAASPTNV) is interaction with ZYX. The residue at position 1015 (serine 1015) is a Phosphoserine. Low complexity predominate over residues 1041–1050 (SSPVSASPVP). A disordered region spans residues 1041 to 1064 (SSPVSASPVPVGIPTSPKQESASS). A Phosphoserine modification is found at serine 1056.

The protein belongs to the synaptopodin family. In terms of assembly, may self-associate in muscle cells under oxidative stress. Binds F-actin. Interacts with ACTN2; ACTN2 is proposed to anchor SYOP2 at Z lines in mature myocytes. Interacts with AKAP6, PPP3CA and CAMK2A. Interacts (phosphorylated form) with YWHAB; YWHAB competes with ACTN2 for interaction with SYNPO2. Interacts with KPNA2; mediating nuclear import of SYNOP2; dependent on interaction with YWHAB. Interacts with IPO13; may be implicated in SYNOP2 nuclear import. Interacts with ZYX, FLNC, ILK. Interacts with BAG3 (via WW 1 domain). May associate with the CASA complex consisting of HSPA8, HSPB8 and BAG3. Interacts with VPS18. In terms of processing, phosphorylated by PKA, and by CaMK2 at multiple sites. Dephosphorylated by calcineurin; abrogating interaction with YWHAB and impairing nuclear import. Phosphorylated by ILK. As to expression, expressed in heart muscle. Isoform 5 is specifically expressed in skeletal muscle.

It localises to the nucleus. Its subcellular location is the cytoplasm. It is found in the cytoskeleton. The protein localises to the myofibril. The protein resides in the sarcomere. It localises to the z line. Its subcellular location is the cell junction. It is found in the focal adhesion. Has an actin-binding and actin-bundling activity. Can induce the formation of F-actin networks in an isoform-specific manner. At the sarcomeric Z lines is proposed to act as adapter protein that links nascent myofibers to the sarcolemma via ZYX and may play a role in early assembly and stabilization of the Z lines. Involved in autophagosome formation. May play a role in chaperone-assisted selective autophagy (CASA) involved in Z lines maintenance in striated muscle under mechanical tension; may link the client-processing CASA chaperone machinery to a membrane-tethering and fusion complex providing autophagosome membranes. Involved in regulation of cell migration. May be a tumor suppressor. Functionally, involved in regulation of cell migration. Can induce formation of thick, irregular actin bundles in the cell body. In terms of biological role, involved in regulation of cell migration. Can induce long, well-organized actin bundles frequently orientated in parallel along the long axis of the cell showing characteristics of contractile ventral stress fibers. Its function is as follows. Involved in regulation of cell migration. Can induce an amorphous actin meshwork throughout the cell body containing a mixture of long and short, randomly organized thick and thin actin bundles. Can induce long, well-organized actin bundles frequently orientated in parallel along the long axis of the cell showing characteristics of contractile ventral stress fibers. Functionally, involved in regulation of cell migration in part dependent on the Rho-ROCK cascade; can promote formation of nascent focal adhesions, actin bundles at the leading cell edge and lamellipodia. Can induce formation of thick, irregular actin bundles in the cell body; the induced actin network is associated with enhanced cell migration in vitro. The sequence is that of Synaptopodin-2 (SYNPO2) from Homo sapiens (Human).